Consider the following 249-residue polypeptide: 5'-nucleotidase SurE (249 aa).

A divalent metal cation-binding residues include aspartate 8, aspartate 9, serine 39, and asparagine 91.

Belongs to the SurE nucleotidase family. A divalent metal cation is required as a cofactor.

Its subcellular location is the cytoplasm. The enzyme catalyses a ribonucleoside 5'-phosphate + H2O = a ribonucleoside + phosphate. In terms of biological role, nucleotidase that shows phosphatase activity on nucleoside 5'-monophosphates. In Pseudomonas fluorescens (strain SBW25), this protein is 5'-nucleotidase SurE.